The chain runs to 177 residues: Ribosome maturation factor RimM (177 aa).

One can recognise a PRC barrel domain in the interval 100–177 (EDEYYWSDLV…TVLVAWPSDY (78 aa)).

Belongs to the RimM family. Binds ribosomal protein uS19.

The protein resides in the cytoplasm. An accessory protein needed during the final step in the assembly of 30S ribosomal subunit, possibly for assembly of the head region. Essential for efficient processing of 16S rRNA. May be needed both before and after RbfA during the maturation of 16S rRNA. It has affinity for free ribosomal 30S subunits but not for 70S ribosomes. The sequence is that of Ribosome maturation factor RimM from Psychrobacter cryohalolentis (strain ATCC BAA-1226 / DSM 17306 / VKM B-2378 / K5).